We begin with the raw amino-acid sequence, 378 residues long: Acetylornithine deacetylase (378 aa).

His-76 is a Zn(2+) binding site. Residue Asp-78 is part of the active site. Zn(2+) is bound at residue Asp-108. Glu-140 is a catalytic residue. Glu-141, Glu-165, and His-351 together coordinate Zn(2+).

It belongs to the peptidase M20A family. ArgE subfamily. In terms of assembly, homodimer. Requires Zn(2+) as cofactor. It depends on Co(2+) as a cofactor. Glutathione is required as a cofactor.

It localises to the cytoplasm. The catalysed reaction is N(2)-acetyl-L-ornithine + H2O = L-ornithine + acetate. It functions in the pathway amino-acid biosynthesis; L-arginine biosynthesis; L-ornithine from N(2)-acetyl-L-ornithine (linear): step 1/1. In terms of biological role, catalyzes the hydrolysis of the amide bond of N(2)-acetylated L-amino acids. Cleaves the acetyl group from N-acetyl-L-ornithine to form L-ornithine, an intermediate in L-arginine biosynthesis pathway, and a branchpoint in the synthesis of polyamines. The sequence is that of Acetylornithine deacetylase from Vibrio cholerae serotype O1 (strain ATCC 39541 / Classical Ogawa 395 / O395).